The primary structure comprises 210 residues: 7-carboxy-7-deazaguanine synthase (210 aa).

Substrate contacts are provided by residues 12-14 (LQG) and Arg-27. One can recognise a Radical SAM core domain in the interval 18 to 210 (QAGKAAVFCR…VQTHKYLGLP (193 aa)). Positions 31, 46, and 49 each coordinate [4Fe-4S] cluster. Thr-51 contributes to the Mg(2+) binding site. Thr-90 contributes to the substrate binding site. S-adenosyl-L-methionine is bound by residues Gly-92, 133 to 135 (SPK), and 173 to 176 (QPMD). Pro-210 lines the substrate pocket.

This sequence belongs to the radical SAM superfamily. 7-carboxy-7-deazaguanine synthase family. Homodimer. [4Fe-4S] cluster is required as a cofactor. S-adenosyl-L-methionine serves as cofactor. It depends on Mg(2+) as a cofactor.

It catalyses the reaction 6-carboxy-5,6,7,8-tetrahydropterin + H(+) = 7-carboxy-7-deazaguanine + NH4(+). The protein operates within purine metabolism; 7-cyano-7-deazaguanine biosynthesis. Catalyzes the complex heterocyclic radical-mediated conversion of 6-carboxy-5,6,7,8-tetrahydropterin (CPH4) to 7-carboxy-7-deazaguanine (CDG), a step common to the biosynthetic pathways of all 7-deazapurine-containing compounds. The polypeptide is 7-carboxy-7-deazaguanine synthase (Caulobacter vibrioides (strain ATCC 19089 / CIP 103742 / CB 15) (Caulobacter crescentus)).